The following is a 118-amino-acid chain: Large ribosomal subunit protein bL19 (118 aa).

The protein belongs to the bacterial ribosomal protein bL19 family.

In terms of biological role, this protein is located at the 30S-50S ribosomal subunit interface and may play a role in the structure and function of the aminoacyl-tRNA binding site. This is Large ribosomal subunit protein bL19 from Beutenbergia cavernae (strain ATCC BAA-8 / DSM 12333 / CCUG 43141 / JCM 11478 / NBRC 16432 / NCIMB 13614 / HKI 0122).